The following is a 363-amino-acid chain: Aminomethyltransferase (363 aa).

Belongs to the GcvT family. As to quaternary structure, the glycine cleavage system is composed of four proteins: P, T, L and H.

It catalyses the reaction N(6)-[(R)-S(8)-aminomethyldihydrolipoyl]-L-lysyl-[protein] + (6S)-5,6,7,8-tetrahydrofolate = N(6)-[(R)-dihydrolipoyl]-L-lysyl-[protein] + (6R)-5,10-methylene-5,6,7,8-tetrahydrofolate + NH4(+). Its function is as follows. The glycine cleavage system catalyzes the degradation of glycine. This Teredinibacter turnerae (strain ATCC 39867 / T7901) protein is Aminomethyltransferase.